The sequence spans 381 residues: tRNA pseudouridine synthase D (381 aa).

The active-site Nucleophile is Asp-81. Residues 160–335 (GMPNYFGSQR…TLGSRRFFWV (176 aa)) enclose the TRUD domain.

This sequence belongs to the pseudouridine synthase TruD family.

The enzyme catalyses uridine(13) in tRNA = pseudouridine(13) in tRNA. Responsible for synthesis of pseudouridine from uracil-13 in transfer RNAs. The polypeptide is tRNA pseudouridine synthase D (Helicobacter pylori (strain ATCC 700392 / 26695) (Campylobacter pylori)).